The following is a 361-amino-acid chain: Peptide chain release factor 1 (361 aa).

Position 237 is an N5-methylglutamine (Gln237). A compositionally biased stretch (basic and acidic residues) spans 287–297 (KQQKEQSDTRK). The interval 287–307 (KQQKEQSDTRKNLVGSGDRSE) is disordered.

It belongs to the prokaryotic/mitochondrial release factor family. Methylated by PrmC. Methylation increases the termination efficiency of RF1.

The protein localises to the cytoplasm. Its function is as follows. Peptide chain release factor 1 directs the termination of translation in response to the peptide chain termination codons UAG and UAA. This chain is Peptide chain release factor 1, found in Francisella philomiragia subsp. philomiragia (strain ATCC 25017 / CCUG 19701 / FSC 153 / O#319-036).